A 258-amino-acid chain; its full sequence is Imidazole glycerol phosphate synthase subunit HisF (258 aa).

Residues D11 and D130 contribute to the active site.

It belongs to the HisA/HisF family. In terms of assembly, heterodimer of HisH and HisF.

The protein localises to the cytoplasm. It catalyses the reaction 5-[(5-phospho-1-deoxy-D-ribulos-1-ylimino)methylamino]-1-(5-phospho-beta-D-ribosyl)imidazole-4-carboxamide + L-glutamine = D-erythro-1-(imidazol-4-yl)glycerol 3-phosphate + 5-amino-1-(5-phospho-beta-D-ribosyl)imidazole-4-carboxamide + L-glutamate + H(+). It participates in amino-acid biosynthesis; L-histidine biosynthesis; L-histidine from 5-phospho-alpha-D-ribose 1-diphosphate: step 5/9. In terms of biological role, IGPS catalyzes the conversion of PRFAR and glutamine to IGP, AICAR and glutamate. The HisF subunit catalyzes the cyclization activity that produces IGP and AICAR from PRFAR using the ammonia provided by the HisH subunit. In Methylorubrum extorquens (strain CM4 / NCIMB 13688) (Methylobacterium extorquens), this protein is Imidazole glycerol phosphate synthase subunit HisF.